The chain runs to 447 residues: Omega-3 fatty acid desaturase, chloroplastic (447 aa).

The Histidine box-1 signature appears at 167–171 (HDCGH). Positions 203 to 207 (HRTHH) match the Histidine box-2 motif. The short motif at 370–374 (HVIHH) is the Histidine box-3 element.

Belongs to the fatty acid desaturase type 1 family.

The protein localises to the plastid. Its subcellular location is the chloroplast membrane. The protein operates within lipid metabolism; polyunsaturated fatty acid biosynthesis. Functionally, chloroplast omega-3 fatty acid desaturase introduces the third double bond in the biosynthesis of 16:3 and 18:3 fatty acids, important constituents of plant membranes. It is thought to use ferredoxin as an electron donor and to act on fatty acids esterified to galactolipids, sulfolipids and phosphatidylglycerol. This is Omega-3 fatty acid desaturase, chloroplastic (FAD7) from Sesamum indicum (Oriental sesame).